The sequence spans 243 residues: Ribonuclease PH (243 aa).

Phosphate-binding positions include Arg91 and 129–131; that span reads GTR.

The protein belongs to the RNase PH family. Homohexameric ring arranged as a trimer of dimers.

The catalysed reaction is tRNA(n+1) + phosphate = tRNA(n) + a ribonucleoside 5'-diphosphate. In terms of biological role, phosphorolytic 3'-5' exoribonuclease that plays an important role in tRNA 3'-end maturation. Removes nucleotide residues following the 3'-CCA terminus of tRNAs; can also add nucleotides to the ends of RNA molecules by using nucleoside diphosphates as substrates, but this may not be physiologically important. Probably plays a role in initiation of 16S rRNA degradation (leading to ribosome degradation) during starvation. The protein is Ribonuclease PH of Burkholderia mallei (strain NCTC 10247).